Consider the following 118-residue polypeptide: Small ribosomal subunit protein uS13 (118 aa).

Residues 94–118 (GLPVRGQRTKTNARTRKGPRKPIKK) are disordered.

The protein belongs to the universal ribosomal protein uS13 family. In terms of assembly, part of the 30S ribosomal subunit. Forms a loose heterodimer with protein S19. Forms two bridges to the 50S subunit in the 70S ribosome.

Functionally, located at the top of the head of the 30S subunit, it contacts several helices of the 16S rRNA. In the 70S ribosome it contacts the 23S rRNA (bridge B1a) and protein L5 of the 50S subunit (bridge B1b), connecting the 2 subunits; these bridges are implicated in subunit movement. Contacts the tRNAs in the A and P-sites. The sequence is that of Small ribosomal subunit protein uS13 from Shigella dysenteriae serotype 1 (strain Sd197).